The sequence spans 971 residues: U2 snRNP component HSH155 (971 aa).

Disordered regions lie at residues 1 to 22 (MSHP…LGGQ) and 54 to 118 (TRTV…AVKE). The segment covering 8 to 22 (VNANNSDKSHQLGGQ) has biased composition (polar residues). A compositionally biased stretch (basic and acidic residues) spans 54–75 (TRTVQNREDSYHKRRFDMKFEP). Residues 78–90 (DTQTVTSSENTQD) show a composition bias toward polar residues. HEAT repeat units lie at residues 199–237 (MIFN…DLTK), 273–310 (AGLK…ALGV), 350–387 (NHLT…NSYP), 513–550 (LGCS…LLGT), 596–633 (PFLA…VIKN), 680–717 (PPIN…LAPT), 722–759 (KEWM…AIGP), 792–829 (CGPY…YIGN), and 832–870 (KDYI…NCSG).

Belongs to the SF3B1 family. As to quaternary structure, belongs to the CWC complex (or CEF1-associated complex), a spliceosome sub-complex reminiscent of a late-stage spliceosome composed of the U2, U5 and U6 snRNAs and at least BUD13, BUD31, BRR2, CDC40, CEF1, CLF1, CUS1, CWC2, CWC15, CWC21, CWC22, CWC23, CWC24, CWC25, CWC27, ECM2, HSH155, IST3, ISY1, LEA1, MSL1, NTC20, PRP8, PRP9, PRP11, PRP19, PRP21, PRP22, PRP45, PRP46, SLU7, SMB1, SMD1, SMD2, SMD3, SMX2, SMX3, SNT309, SNU114, SPP2, SYF1, SYF2, RSE1 and YJU2. Interacts with RDS3.

The protein resides in the nucleus. Functionally, contacts pre-mRNA on both sides of the branch site early in spliceosome assembly. This chain is U2 snRNP component HSH155 (HSH155), found in Saccharomyces cerevisiae (strain ATCC 204508 / S288c) (Baker's yeast).